Consider the following 228-residue polypeptide: Lipoprotein-releasing system ATP-binding protein LolD (228 aa).

In terms of domain architecture, ABC transporter spans 7 to 228 (LNCQNLTKDY…MQDGVLRPEM (222 aa)). 43 to 50 (GSSGSGKS) is an ATP binding site.

This sequence belongs to the ABC transporter superfamily. Lipoprotein translocase (TC 3.A.1.125) family. The complex is composed of two ATP-binding proteins (LolD) and two transmembrane proteins (LolC and LolE).

Its subcellular location is the cell inner membrane. Functionally, part of the ABC transporter complex LolCDE involved in the translocation of mature outer membrane-directed lipoproteins, from the inner membrane to the periplasmic chaperone, LolA. Responsible for the formation of the LolA-lipoprotein complex in an ATP-dependent manner. The polypeptide is Lipoprotein-releasing system ATP-binding protein LolD (Mannheimia succiniciproducens (strain KCTC 0769BP / MBEL55E)).